Consider the following 205-residue polypeptide: MNTEIIVLFIIHFIMINENVFIALLHYPAMDKDGKIIVTSFTTMDLHDIARPARAYEINKYYIVQPIDAQRIVIQRQINYWLSEEGRKANPTRYEIVQLVRLAYTLDEVIEDIEKERGRRPLLVGTDARTYPNTVKYSWLRNEIQKRDRDWLIVFGTGHGIPPDLMNTFDYILEPIYGAGDWNHLSVRNAVAIILDRLFSRNRCD.

A helical membrane pass occupies residues 5–27; sequence IIVLFIIHFIMINENVFIALLHY.

To T.maritima TM1570.

The protein resides in the membrane. This is an uncharacterized protein from Aquifex aeolicus (strain VF5).